A 1366-amino-acid polypeptide reads, in one-letter code: DNA-directed RNA polymerase subunit beta' (1366 aa).

Residues 1–23 (MTSSKPKKSSRVRKTTKNSKKNH) show a composition bias toward basic residues. A disordered region spans residues 1–37 (MTSSKPKKSSRVRKTTKNSKKNHNTMMPLLPKTPPSF). Zn(2+) contacts are provided by C248, C315, C322, and C325. The interval 1304–1366 (TAILDDPSDE…LQEEGLLSDG (63 aa)) is disordered. The span at 1354 to 1366 (LEGLQEEGLLSDG) shows a compositional bias: low complexity.

This sequence belongs to the RNA polymerase beta' chain family. RpoC2 subfamily. As to quaternary structure, in cyanobacteria the RNAP catalytic core is composed of 2 alpha, 1 beta, 1 beta', 1 gamma and 1 omega subunit. When a sigma factor is associated with the core the holoenzyme is formed, which can initiate transcription. Zn(2+) is required as a cofactor.

The enzyme catalyses RNA(n) + a ribonucleoside 5'-triphosphate = RNA(n+1) + diphosphate. Its function is as follows. DNA-dependent RNA polymerase catalyzes the transcription of DNA into RNA using the four ribonucleoside triphosphates as substrates. This chain is DNA-directed RNA polymerase subunit beta', found in Prochlorococcus marinus subsp. pastoris (strain CCMP1986 / NIES-2087 / MED4).